Reading from the N-terminus, the 137-residue chain is MAPKAEKKPAEKKPTEEKAEKKPRAEKRVPGKEGGEKKGKKKAKKSVETYKIYIFKVLKQVHPDIGISSKAMSIMNSFINDIFEKLAAEAAKLARYNKKPTITSREIQTSVRLVLPGELAKHAVSEGTKAVTKFTSS.

Basic and acidic residues predominate over residues 1-37; the sequence is MAPKAEKKPAEKKPTEEKAEKKPRAEKRVPGKEGGEK. The segment at 1 to 45 is disordered; it reads MAPKAEKKPAEKKPTEEKAEKKPRAEKRVPGKEGGEKKGKKKAKK. 2 positions are modified to N6-acetyllysine: Lys7 and Lys27. Lys133 is covalently cross-linked (Glycyl lysine isopeptide (Lys-Gly) (interchain with G-Cter in ubiquitin)).

It belongs to the histone H2B family. The nucleosome is a histone octamer containing two molecules each of H2A, H2B, H3 and H4 assembled in one H3-H4 heterotetramer and two H2A-H2B heterodimers. The octamer wraps approximately 147 bp of DNA. Can be acetylated to form H2BK6ac and H2BK33ac. In terms of processing, monoubiquitinated to form H2BK143ub1; may give a specific tag for epigenetic transcriptional activation.

It is found in the nucleus. The protein resides in the chromosome. Its function is as follows. Core component of nucleosome. Nucleosomes wrap and compact DNA into chromatin, limiting DNA accessibility to the cellular machineries which require DNA as a template. Histones thereby play a central role in transcription regulation, DNA repair, DNA replication and chromosomal stability. DNA accessibility is regulated via a complex set of post-translational modifications of histones, also called histone code, and nucleosome remodeling. This Zea mays (Maize) protein is Histone H2B.4.